The following is a 65-amino-acid chain: MSKAHRGKGIRGMVGRGRGVCPVTGQTGVKLLYECEIDGKKVKVSKVGRATLQNRKRRLDAQPGA.

This is an uncharacterized protein from Treponema pallidum (strain Nichols).